The primary structure comprises 540 residues: Hydroxylamine reductase (540 aa).

C3, C6, C15, and C21 together coordinate [4Fe-4S] cluster. H236, E260, C304, C395, C423, C448, E483, and K485 together coordinate hybrid [4Fe-2O-2S] cluster. A Cysteine persulfide modification is found at C395.

It belongs to the HCP family. [4Fe-4S] cluster serves as cofactor. It depends on hybrid [4Fe-2O-2S] cluster as a cofactor.

It is found in the cytoplasm. The enzyme catalyses A + NH4(+) + H2O = hydroxylamine + AH2 + H(+). In terms of biological role, catalyzes the reduction of hydroxylamine to form NH(3) and H(2)O. In Methanosarcina mazei (strain ATCC BAA-159 / DSM 3647 / Goe1 / Go1 / JCM 11833 / OCM 88) (Methanosarcina frisia), this protein is Hydroxylamine reductase.